Here is a 132-residue protein sequence, read N- to C-terminus: Major pollen allergen Art v 1 (132 aa).

The first 24 residues, 1 to 24 (MAKCSYVFCAVLLIFIVAIGEMEA), serve as a signal peptide directing secretion. The tract at residues 28–77 (KLCEKTSKTYSGKCDNKKCDKKCIEWEKAQHGACHKREAGKESCFCYFDC) is defensin-like domain. Intrachain disulfides connect cysteine 30/cysteine 77, cysteine 41/cysteine 61, cysteine 46/cysteine 71, and cysteine 50/cysteine 73. Epitope recognized by IgE antibodies of mugwort pollen-sensitized patients regions lie at residues 64–70 (REAGKES) and 79–87 (KSPPGATPA). Residues 81–132 (PPGATPAPPGAAPPPAAGGSPSPPADGGSPPPPADGGSPPVDGGSPPPPSTH) are disordered. Positions 83-114 (GATPAPPGAAPPPAAGGSPSPPADGGSPPPPA) are enriched in pro residues. Over residues 115 to 124 (DGGSPPVDGG) the composition is skewed to low complexity.

In the N-terminal section; belongs to the DEFL family. Post-translationally, the mature protein extracted from the plant exhibits an average rate of 76% of hydroxyprolines. O-glycosylated. O-linkage of 3 galactoses plus 9-16 or 21-23 arabinose residues attached on one or two hydroxyprolines.

It is found in the secreted. The sequence is that of Major pollen allergen Art v 1 from Artemisia vulgaris (Mugwort).